The sequence spans 214 residues: Phosphatidylserine decarboxylase proenzyme (214 aa).

The active-site Schiff-base intermediate with substrate; via pyruvic acid is Ser-182. Ser-182 is modified (pyruvic acid (Ser); by autocatalysis).

The protein belongs to the phosphatidylserine decarboxylase family. PSD-A subfamily. Heterodimer of a large membrane-associated beta subunit and a small pyruvoyl-containing alpha subunit. The cofactor is pyruvate. In terms of processing, is synthesized initially as an inactive proenzyme. Formation of the active enzyme involves a self-maturation process in which the active site pyruvoyl group is generated from an internal serine residue via an autocatalytic post-translational modification. Two non-identical subunits are generated from the proenzyme in this reaction, and the pyruvate is formed at the N-terminus of the alpha chain, which is derived from the carboxyl end of the proenzyme. The post-translation cleavage follows an unusual pathway, termed non-hydrolytic serinolysis, in which the side chain hydroxyl group of the serine supplies its oxygen atom to form the C-terminus of the beta chain, while the remainder of the serine residue undergoes an oxidative deamination to produce ammonia and the pyruvoyl prosthetic group on the alpha chain.

Its subcellular location is the cell membrane. It catalyses the reaction a 1,2-diacyl-sn-glycero-3-phospho-L-serine + H(+) = a 1,2-diacyl-sn-glycero-3-phosphoethanolamine + CO2. Its pathway is phospholipid metabolism; phosphatidylethanolamine biosynthesis; phosphatidylethanolamine from CDP-diacylglycerol: step 2/2. Its function is as follows. Catalyzes the formation of phosphatidylethanolamine (PtdEtn) from phosphatidylserine (PtdSer). The polypeptide is Phosphatidylserine decarboxylase proenzyme (Burkholderia multivorans (strain ATCC 17616 / 249)).